A 413-amino-acid polypeptide reads, in one-letter code: Eukaryotic initiation factor 4A-7 (413 aa).

The Q motif signature appears at 40–68; that stretch reads DSFDAMGLQENLLRGIYAYGFEKPSAIQQ. Residues 71 to 241 form the Helicase ATP-binding domain; it reads IVPFCKGLDV…RKFMNKPVRI (171 aa). ATP is bound at residue 84 to 91; it reads AQSGTGKT. Positions 189-192 match the DEAD box motif; it reads DEAD. Residues 252 to 413 form the Helicase C-terminal domain; the sequence is GIKQFYVNVD…ELPANVADLL (162 aa).

The protein belongs to the DEAD box helicase family. eIF4A subfamily. As to quaternary structure, eIF4F is a multi-subunit complex, the composition of which varies with external and internal environmental conditions. It is composed of at least EIF4A, EIF4E and EIF4G.

The enzyme catalyses ATP + H2O = ADP + phosphate + H(+). Its function is as follows. ATP-dependent RNA helicase which is a subunit of the eIF4F complex involved in cap recognition and is required for mRNA binding to ribosome. In the current model of translation initiation, eIF4A unwinds RNA secondary structures in the 5'-UTR of mRNAs which is necessary to allow efficient binding of the small ribosomal subunit, and subsequent scanning for the initiator codon. The polypeptide is Eukaryotic initiation factor 4A-7 (Nicotiana tabacum (Common tobacco)).